The chain runs to 971 residues: Nucleolar protein dao-5 (971 aa).

2 disordered regions span residues 61 to 926 and 938 to 971; these read RIAS…QWGQ and KAFRHEKTKKKKGSYGGGPINQSINSIKFSDSDD. Positions 134–150 are enriched in low complexity; it reads KKPAQTPAQKKAASSSD. Acidic residues predominate over residues 180-190; sequence SDSDSDSEDSD. Low complexity-rich tracts occupy residues 264 to 275, 294 to 304, 324 to 335, 355 to 366, 386 to 397, 417 to 428, 447 to 457, 476 to 498, 508 to 519, 539 to 550, 569 to 579, 598 to 620, 630 to 641, 691 to 712, 751 to 761, 780 to 791, and 815 to 825; these read AKPAPAKATPKP, KKTPAKAAPKP, AKPTPAKATPKP, AKPTSAKATPKP, AKSTPAKITPKPTAKKVASSSSD, AKPTPANATPKP, AKSTPAKTTPKPTAKKAASSSSD, KATPVKVTPKSVTKKAAASSSD, AKPTPKATPKQ, KKTPAKSTPAKT, and ATTPAKSTPKT. Positions 907 to 921 are enriched in basic and acidic residues; the sequence is SVSEKFRNNQHDSHF. The segment covering 939-950 has biased composition (basic residues); the sequence is AFRHEKTKKKKG. Polar residues predominate over residues 957–971; sequence INQSINSIKFSDSDD.

It belongs to the NOLC1 family. In terms of assembly, may form dimers. Interacts with RNA polymerase I. Expressed in the nerve ring and hypodermal tissues. Expressed in the intestine. Expressed in the germline.

Its subcellular location is the nucleus. The protein resides in the nucleolus. The protein localises to the nucleoplasm. In terms of biological role, nucleolar protein which binds to RNA polymerase I and rDNA and is required for efficient RNA polymerase I-mediated rDNA transcription. Maintains the epigenetically active status of rDNA chromatin which facilitates rDNA transcription and sustains germline development, ensuring fertility. Plays a role in the modulation of nucleolus size. May play a role in the regulation of lifespan. This Caenorhabditis elegans protein is Nucleolar protein dao-5.